A 37-amino-acid chain; its full sequence is Large ribosomal subunit protein bL36 (37 aa).

It belongs to the bacterial ribosomal protein bL36 family.

This Sulfurihydrogenibium sp. (strain YO3AOP1) protein is Large ribosomal subunit protein bL36.